The chain runs to 285 residues: CBY1-interacting BAR domain-containing protein 1-B (285 aa).

The N-terminal 48 residues, 1-48 (MSQTPEARTRDNQTRQIQESVNNVEKHFGELCQIFAGYVRKTARLRDK), are a transit peptide targeting the mitochondrion. A BAR-like region spans residues 11-221 (DNQTRQIQES…DIDEEEDLEV (211 aa)). The stretch at 142–184 (RQIISQAETELQRATMDAARISQQLEETIDNFEKQKIKDIKKL) forms a coiled coil. Residues 241–261 (NSRSGSTSRAPSVISQPPGNR) are compositionally biased toward polar residues. The interval 241 to 285 (NSRSGSTSRAPSVISQPPGNRQKNRMEDDEDGEDDNDENSTEDEN) is disordered. A compositionally biased stretch (acidic residues) spans 267–285 (EDDEDGEDDNDENSTEDEN).

Belongs to the CIBAR family.

The protein resides in the cytoplasm. Its subcellular location is the cytoskeleton. It is found in the microtubule organizing center. It localises to the centrosome. The protein localises to the centriole. The protein resides in the cell projection. Its subcellular location is the cilium. It is found in the nucleus. It localises to the mitochondrion inner membrane. The protein localises to the flagellum. Functionally, plays a critical role in regulating mitochondrial ultrastructure and function by maintaining the integrity of mitochondrial morphology, particularly the organization of cristae. Plays a crucial role in ciliogenesis. Plays a key role in the correct positioning of the annulus, a septin-based ring structure in the sperm flagellum, serving both as a physical barrier and a membrane diffusion barrier that separates the midpiece (MP) from the principal piece (PP). The polypeptide is CBY1-interacting BAR domain-containing protein 1-B (Xenopus laevis (African clawed frog)).